The chain runs to 452 residues: Serine incorporator 2 (452 aa).

11 consecutive transmembrane segments (helical) span residues 5–25, 41–61, 96–116, 131–151, 158–178, 205–225, 236–256, 266–286, 319–339, 387–407, and 426–446; these read LGACSLLSCASCLCGSAPCIL, FFTVFLFLGVLVCVIMLSPGV, AVYRMCFAMAAFFFLFSLLMV, GFWFFKFLIFVGITVGAFYIP, IWFYFGVVGSFIFLLIQLLLL, LFFFTLLFYALSITAVALLFV, GKVFIGLNLTLCVCVSIVAIL, SGLLQASVITLYTMFVTWLAL, WDAPSIVGLVVFILCTVFISL, FFHLCLVLASVHIMMTLTNWY, and ICASWTGLLLYLWTLVAPLLL.

The protein belongs to the TDE1 family.

The protein localises to the cell membrane. It carries out the reaction a 1,2-diacyl-sn-glycero-3-phospho-L-serine(in) = a 1,2-diacyl-sn-glycero-3-phospho-L-serine(out). It catalyses the reaction a 1,2-diacyl-sn-glycero-3-phosphocholine(in) = a 1,2-diacyl-sn-glycero-3-phosphocholine(out). The catalysed reaction is a 1,2-diacyl-sn-glycero-3-phosphoethanolamine(in) = a 1,2-diacyl-sn-glycero-3-phosphoethanolamine(out). Its function is as follows. Non-ATP-dependent, non-specific lipid transporter for phosphatidylserine, phosphatidylcholine, and phosphatidylethanolamine. Functions as a scramblase that flips lipids in both directions across the membrane. In contrast to SERINC3 and SERINC5, has no effect on gammaretrovirus particles infectivity. The sequence is that of Serine incorporator 2 (SERINC2) from Bos taurus (Bovine).